Consider the following 138-residue polypeptide: Acidic phospholipase A2 inhibitor vaspin A chain (138 aa).

Residues 1–16 (MRTLWIVAVCLIGVEG) form the signal peptide. Disulfide bonds link C42/C131, C44/C60, C59/C111, C65/C138, C66/C104, C73/C97, and C91/C102.

The protein belongs to the phospholipase A2 family. Group II subfamily. D49 sub-subfamily. As to quaternary structure, heterodimer of a toxic basic protein having phospholipase A2 activity (B chain (AC Q8JFG0)) and a non-toxic acidic protein functioning as its inhibitor (A chain). Expressed by the venom gland.

It is found in the secreted. In terms of biological role, heterodimer: postsynaptic neurotoxin. Functionally, monomer: the acidic chain inhibits the basic phospholipase A2 of the complex. The sequence is that of Acidic phospholipase A2 inhibitor vaspin A chain from Vipera aspis aspis (Aspic viper).